The following is a 235-amino-acid chain: Protein mxl-3 (235 aa).

The segment at 18-49 (EKQFRKRHHSDSSDDDSSSPKSASPSMDDDRR) is disordered. Positions 47 to 60 (DRRAHHNELERRRR) are basic motif. Residues 47 to 98 (DRRAHHNELERRRRDHIKDHFTILKDAIPLLDGEKSSRALILKRAVEFIHVM) form the bHLH domain. Positions 61–98 (DHIKDHFTILKDAIPLLDGEKSSRALILKRAVEFIHVM) are helix-loop-helix motif.

This sequence belongs to the MAX family. May form homodimer. Interacts (via N-terminus) with skn-1 isoforms a and c. In terms of tissue distribution, expressed in the intestine and in the AWC sensory neurons.

It is found in the nucleus. The protein resides in the cytoplasm. In terms of biological role, transcription factor which regulates the expression of genes involved in lipid metabolism in response to nutrient availability. Binds to the E-box motif 5'-CACGTG-3'. Under well-fed conditions, binds to the promoter and represses the expression of lipase genes lipl-1, lipl-2, lipl-3 and to a lesser extent lipl-5, thereby preventing lipolysis. In response to a high-glucose diet, promotes fatty acid synthesis, elongation and desaturation by up-regulating transcription factor sbp-1 expression. Under well-fed conditions, acts remotely in the intestine to up-regulate the expression of chemoreceptor srh-234 gene in the ADL sensory neuron, possibly by regulating the insulin signaling pathway. The chain is Protein mxl-3 from Caenorhabditis elegans.